A 551-amino-acid polypeptide reads, in one-letter code: Crossover junction endonuclease EME1B (551 aa).

Disordered stretches follow at residues 1-55 (MNDH…PIFV) and 187-239 (TTLP…RLEK). Over residues 37 to 51 (SDPTPQKQPPESSFT) the composition is skewed to polar residues. The segment covering 202–239 (SKEDKTSAMEEKKLRKEQERLEKAASKAEEAERKRLEK) has biased composition (basic and acidic residues). The stretch at 203 to 253 (KEDKTSAMEEKKLRKEQERLEKAASKAEEAERKRLEKEKKKWEKGKLALKS) forms a coiled coil. The ERCC4 domain maps to 287–484 (NPIERSIVWT…PSMKSLLKVY (198 aa)).

Belongs to the EME1/MMS4 family. Forms a heterodimer with MUS81. Mg(2+) serves as cofactor. Requires Ca(2+) as cofactor.

The protein localises to the nucleus. Interacts with MUS81 to form a DNA structure-specific endonuclease with substrate preference for branched DNA structures with a 5'-end at the branch nick. Typical substrates include 3'-flap structures, D-loops, replication forks, nicked Holliday junctions and also intact Holliday junctions with a reduced efficiency. May be required in mitosis for the processing of stalled or collapsed replication fork intermediates. Plays a role in DNA repair and in genotoxic stress-induced homologous recombination (HR) in somatic cells. Mediates a subset of meiotic recombination events that are insensitive to crossover interference. The sequence is that of Crossover junction endonuclease EME1B (EME1B) from Arabidopsis thaliana (Mouse-ear cress).